Consider the following 280-residue polypeptide: Shikimate dehydrogenase (NADP(+)) (280 aa).

Shikimate contacts are provided by residues 20–22 (TLS) and T67. K71 serves as the catalytic Proton acceptor. Residues N92 and D107 each coordinate shikimate. Residues 131-135 (GAGGA), 154-159 (NRTIDK), and L224 each bind NADP(+). Y226 serves as a coordination point for shikimate. G247 contributes to the NADP(+) binding site.

The protein belongs to the shikimate dehydrogenase family. As to quaternary structure, homodimer.

The enzyme catalyses shikimate + NADP(+) = 3-dehydroshikimate + NADPH + H(+). It functions in the pathway metabolic intermediate biosynthesis; chorismate biosynthesis; chorismate from D-erythrose 4-phosphate and phosphoenolpyruvate: step 4/7. Involved in the biosynthesis of the chorismate, which leads to the biosynthesis of aromatic amino acids. Catalyzes the reversible NADPH linked reduction of 3-dehydroshikimate (DHSA) to yield shikimate (SA). The protein is Shikimate dehydrogenase (NADP(+)) of Carboxydothermus hydrogenoformans (strain ATCC BAA-161 / DSM 6008 / Z-2901).